A 201-amino-acid chain; its full sequence is Protein GrpE (201 aa).

This sequence belongs to the GrpE family. Homodimer.

The protein resides in the cytoplasm. In terms of biological role, participates actively in the response to hyperosmotic and heat shock by preventing the aggregation of stress-denatured proteins, in association with DnaK and GrpE. It is the nucleotide exchange factor for DnaK and may function as a thermosensor. Unfolded proteins bind initially to DnaJ; upon interaction with the DnaJ-bound protein, DnaK hydrolyzes its bound ATP, resulting in the formation of a stable complex. GrpE releases ADP from DnaK; ATP binding to DnaK triggers the release of the substrate protein, thus completing the reaction cycle. Several rounds of ATP-dependent interactions between DnaJ, DnaK and GrpE are required for fully efficient folding. The polypeptide is Protein GrpE (Shewanella denitrificans (strain OS217 / ATCC BAA-1090 / DSM 15013)).